The sequence spans 177 residues: RNA pyrophosphohydrolase (177 aa).

Residues 6–149 (GYRPNVGIVI…KRDVYRRVMK (144 aa)) enclose the Nudix hydrolase domain. The Nudix box motif lies at 38–59 (GGINPGESAEQAMYRELFEEVG).

It belongs to the Nudix hydrolase family. RppH subfamily. It depends on a divalent metal cation as a cofactor.

Functionally, accelerates the degradation of transcripts by removing pyrophosphate from the 5'-end of triphosphorylated RNA, leading to a more labile monophosphorylated state that can stimulate subsequent ribonuclease cleavage. This is RNA pyrophosphohydrolase from Pectobacterium carotovorum subsp. carotovorum (strain PC1).